The following is a 476-amino-acid chain: Glycogen synthase (476 aa).

ADP-alpha-D-glucose is bound at residue K15.

This sequence belongs to the glycosyltransferase 1 family. Bacterial/plant glycogen synthase subfamily.

It carries out the reaction [(1-&gt;4)-alpha-D-glucosyl](n) + ADP-alpha-D-glucose = [(1-&gt;4)-alpha-D-glucosyl](n+1) + ADP + H(+). The protein operates within glycan biosynthesis; glycogen biosynthesis. Its function is as follows. Synthesizes alpha-1,4-glucan chains using ADP-glucose. The sequence is that of Glycogen synthase from Bacillus cereus (strain B4264).